The following is a 307-amino-acid chain: Glycine--tRNA ligase alpha subunit (307 aa).

This sequence belongs to the class-II aminoacyl-tRNA synthetase family. In terms of assembly, tetramer of two alpha and two beta subunits.

The protein localises to the cytoplasm. It catalyses the reaction tRNA(Gly) + glycine + ATP = glycyl-tRNA(Gly) + AMP + diphosphate. The protein is Glycine--tRNA ligase alpha subunit of Aeromonas salmonicida (strain A449).